Consider the following 541-residue polypeptide: CTP synthase (541 aa).

Residues 1–268 (MAKFIFITGG…AEIVCRRLGL (268 aa)) are amidoligase domain. Position 13 (Ser13) interacts with CTP. Ser13 provides a ligand contact to UTP. Residues 14–19 (GLGKGI) and Asp71 each bind ATP. 2 residues coordinate Mg(2+): Asp71 and Glu141. CTP contacts are provided by residues 148 to 150 (DIE), 189 to 194 (KTKPTQ), and Lys225. UTP contacts are provided by residues 189–194 (KTKPTQ) and Lys225. In terms of domain architecture, Glutamine amidotransferase type-1 spans 293-539 (EIALVGKYVA…IKAALEYRAG (247 aa)). Residue Gly359 participates in L-glutamine binding. Cys386 serves as the catalytic Nucleophile; for glutamine hydrolysis. L-glutamine is bound by residues 387 to 390 (MGMQ), Glu410, and Arg467. Active-site residues include His512 and Glu514.

This sequence belongs to the CTP synthase family. Homotetramer.

The enzyme catalyses UTP + L-glutamine + ATP + H2O = CTP + L-glutamate + ADP + phosphate + 2 H(+). It catalyses the reaction L-glutamine + H2O = L-glutamate + NH4(+). The catalysed reaction is UTP + NH4(+) + ATP = CTP + ADP + phosphate + 2 H(+). Its pathway is pyrimidine metabolism; CTP biosynthesis via de novo pathway; CTP from UDP: step 2/2. Allosterically activated by GTP, when glutamine is the substrate; GTP has no effect on the reaction when ammonia is the substrate. The allosteric effector GTP functions by stabilizing the protein conformation that binds the tetrahedral intermediate(s) formed during glutamine hydrolysis. Inhibited by the product CTP, via allosteric rather than competitive inhibition. Its function is as follows. Catalyzes the ATP-dependent amination of UTP to CTP with either L-glutamine or ammonia as the source of nitrogen. Regulates intracellular CTP levels through interactions with the four ribonucleotide triphosphates. In Symbiobacterium thermophilum (strain DSM 24528 / JCM 14929 / IAM 14863 / T), this protein is CTP synthase.